A 507-amino-acid chain; its full sequence is Lysine--tRNA ligase (507 aa).

The Mg(2+) site is built by Glu416 and Glu423.

Belongs to the class-II aminoacyl-tRNA synthetase family. As to quaternary structure, homodimer. It depends on Mg(2+) as a cofactor.

The protein resides in the cytoplasm. The enzyme catalyses tRNA(Lys) + L-lysine + ATP = L-lysyl-tRNA(Lys) + AMP + diphosphate. The polypeptide is Lysine--tRNA ligase (Hahella chejuensis (strain KCTC 2396)).